The primary structure comprises 914 residues: MKRRLMKGISLLTLVFLIGIMLQLSLKSELTAYASSDDPYKQRFLELWEELHDPSNGYFSSHGIPYHAVETLIVEAPDYGHLTTSEAMSYYLWLEALYGKFTGDFSYFMKAWETIEKYMIPTEQDQPNRSMAGYNPAKPATYAPEWEEPSMYPSQLDFSAPVGIDPIYNELVSTYGTNTIYGMHWLLDVDNWYGFGRRADRISSPAYINTFQRGSQESVWETIPQPCWDDLTIGGRNGFLDLFVGDSQYSAQFKYTNAPDADARAIQATYWANQWAKEHGVNLSQYVKKASRMGDYLRYAMFDKYFRKIGDSKQAGTGYDAAHYLLSWYYAWGGGITADWAWIIGCSHVHAGYQNPMTAWILANDPEFKPESPNGANDWAKSLERQLEFYQWLQSAEGAIAGGATNSYKGRYETLPAGISTFYGMAYEEHPVYLDPGSNTWFGFQAWTMQRVAEYYYLTGDTRAEQLLDKWVDWIKSVVRLNSDGTFEIPGNLEWSGQPDTWTGTYTGNPNLHVSVVSYGTDLGAAGSLANALLYYAKTSGDDEARNLAKELLDRMWNLYRDDKGLSAPETREDYVRFFEQEVYVPQGWSGTMPNGDRIEPGVTFLDIRSKYLNDPDYPKLQQAYNEGKAPVFNYHRFWAQCDIAIANGLYSILFGSEQANDSFITPTSATFDKNNQEDISVTVTYNGNTLLGIKSGSSYLIEGVDYIVNGDVIIIKKEFLAGQATGSISLLFDFSAGLDRTLTIDIIDTGGGEEPVEPVEPVEGVLIIQSFNANTQEISNSIMPRFRIYNSGNTSIPLSEVKLRYYYTVDGDKPQNFWCDWASIGSSNVTGTFVKMDGATTGADYYLEIGFTPQAGTLEPGASIEVQGRFSKIDWTDYTQTNDYSFNPTASSYVDFNKITAYISGNLVYGIEP.

The signal sequence occupies residues 1 to 33; it reads MKRRLMKGISLLTLVFLIGIMLQLSLKSELTAY. A CBM3 domain is found at 763 to 914; it reads VEGVLIIQSF…SGNLVYGIEP (152 aa).

The protein belongs to the glycosyl hydrolase 48 (cellulase L) family.

It catalyses the reaction Hydrolysis of (1-&gt;4)-beta-D-glucosidic linkages in cellulose and cellotetraose, releasing cellobiose from the non-reducing ends of the chains.. The chain is Exoglucanase-2 (celY) from Thermoclostridium stercorarium (strain ATCC 35414 / DSM 8532 / NCIMB 11754) (Clostridium stercorarium).